The following is a 458-amino-acid chain: Argininosuccinate lyase (458 aa).

It belongs to the lyase 1 family. Argininosuccinate lyase subfamily.

Its subcellular location is the cytoplasm. The catalysed reaction is 2-(N(omega)-L-arginino)succinate = fumarate + L-arginine. The protein operates within amino-acid biosynthesis; L-arginine biosynthesis; L-arginine from L-ornithine and carbamoyl phosphate: step 3/3. The sequence is that of Argininosuccinate lyase from Salmonella newport (strain SL254).